A 484-amino-acid chain; its full sequence is MILKSLLKGLDYEVIKGNEESKVQNIRYDNRKIEQGDAFVCVKGFKVDGHSFIGDAIKKGAKTLIVQEDVSVQEDITIIKVRDTRKALAIMSSNYFGNPKDKLKIIGITGTNGKTTSAFIIKSILEKAGFMTGLIGTIANYIGNKKVDAVRTTPESYELHELFKNMVDAGVEYCVMEVSSHSLELDRVYGIQFEEGIFTNLTRDHLDFHKTFENYYNAKFKLFERSNHSIINLDDPYGANIVKDIEERGVKTKVSTFSIEKESDFKAFEIKSHSNGSEFKVNLEGIEEFSINIPGEYNIYNSLGCIICAYNLNIPMDKIKEGLSDVVIPGRCELVAKEKNLPYSIIIDYAHTPDGLENILSTVKAFTKNRMISVFGCGGDRDKVKRPQMGKIGCELSDIAIITSDNPRSEEPMDIINDIVKPLNYDNFVIEVNRKEAIRKAMNMALEGDVIVIAGKGHETYQILKDETIHFDEREVVYDILEGK.

110–116 (GTNGKTT) serves as a coordination point for ATP. UDP-N-acetyl-alpha-D-muramoyl-L-alanyl-D-glutamate-binding positions include 152 to 153 (TT), serine 179, and arginine 187. Lysine 219 carries the N6-carboxylysine modification. Meso-2,6-diaminopimelate-binding positions include arginine 381, 405-408 (DNPR), glycine 455, and glutamate 459. A Meso-diaminopimelate recognition motif motif is present at residues 405–408 (DNPR).

Belongs to the MurCDEF family. MurE subfamily. The cofactor is Mg(2+). Carboxylation is probably crucial for Mg(2+) binding and, consequently, for the gamma-phosphate positioning of ATP.

It is found in the cytoplasm. The catalysed reaction is UDP-N-acetyl-alpha-D-muramoyl-L-alanyl-D-glutamate + meso-2,6-diaminopimelate + ATP = UDP-N-acetyl-alpha-D-muramoyl-L-alanyl-gamma-D-glutamyl-meso-2,6-diaminopimelate + ADP + phosphate + H(+). It participates in cell wall biogenesis; peptidoglycan biosynthesis. Its function is as follows. Catalyzes the addition of meso-diaminopimelic acid to the nucleotide precursor UDP-N-acetylmuramoyl-L-alanyl-D-glutamate (UMAG) in the biosynthesis of bacterial cell-wall peptidoglycan. This Clostridium perfringens (strain 13 / Type A) protein is UDP-N-acetylmuramoyl-L-alanyl-D-glutamate--2,6-diaminopimelate ligase.